A 620-amino-acid chain; its full sequence is Chaperone protein HscA homolog (620 aa).

It belongs to the heat shock protein 70 family.

Chaperone involved in the maturation of iron-sulfur cluster-containing proteins. Has a low intrinsic ATPase activity which is markedly stimulated by HscB. This chain is Chaperone protein HscA homolog, found in Bordetella petrii (strain ATCC BAA-461 / DSM 12804 / CCUG 43448).